The sequence spans 403 residues: tRNA pseudouridine synthase 4 (403 aa).

D75 functions as the Nucleophile in the catalytic mechanism.

It belongs to the pseudouridine synthase TruB family.

The protein localises to the nucleus. It localises to the mitochondrion. The enzyme catalyses uridine(55) in tRNA = pseudouridine(55) in tRNA. It carries out the reaction a uridine in mRNA = a pseudouridine in mRNA. Its function is as follows. Responsible for synthesis of pseudouridine from uracil-55 in the psi GC loop of transfer RNAs. Also catalyzes pseudouridylation of mRNAs with the consensus sequence 5'-GGUUCRA-3'. This is tRNA pseudouridine synthase 4 (PUS4) from Saccharomyces cerevisiae (strain ATCC 204508 / S288c) (Baker's yeast).